The chain runs to 367 residues: Uroporphyrinogen decarboxylase (367 aa).

Residues 28–32 (RQAGR), Asp78, Tyr158, Thr213, and His334 each bind substrate.

Belongs to the uroporphyrinogen decarboxylase family. As to quaternary structure, homodimer.

It localises to the cytoplasm. The catalysed reaction is uroporphyrinogen III + 4 H(+) = coproporphyrinogen III + 4 CO2. It participates in porphyrin-containing compound metabolism; protoporphyrin-IX biosynthesis; coproporphyrinogen-III from 5-aminolevulinate: step 4/4. Its function is as follows. Catalyzes the decarboxylation of four acetate groups of uroporphyrinogen-III to yield coproporphyrinogen-III. This is Uroporphyrinogen decarboxylase from Ralstonia pickettii (strain 12J).